Consider the following 293-residue polypeptide: ATP synthase gamma chain (293 aa).

This sequence belongs to the ATPase gamma chain family. F-type ATPases have 2 components, CF(1) - the catalytic core - and CF(0) - the membrane proton channel. CF(1) has five subunits: alpha(3), beta(3), gamma(1), delta(1), epsilon(1). CF(0) has three main subunits: a, b and c.

It is found in the cell inner membrane. Its function is as follows. Produces ATP from ADP in the presence of a proton gradient across the membrane. The gamma chain is believed to be important in regulating ATPase activity and the flow of protons through the CF(0) complex. This chain is ATP synthase gamma chain, found in Psychrobacter arcticus (strain DSM 17307 / VKM B-2377 / 273-4).